Reading from the N-terminus, the 371-residue chain is Alanine dehydrogenase (371 aa).

Substrate is bound by residues R15 and K74. The active-site Proton donor/acceptor is the H95. NAD(+)-binding positions include S133, 177–178 (QA), D197, S219, 238–239 (VL), 266–269 (IAID), and 298–301 (VANM). The active-site Proton donor/acceptor is the D269.

This sequence belongs to the AlaDH/PNT family. In terms of assembly, homohexamer. Trimer of dimer.

It carries out the reaction L-alanine + NAD(+) + H2O = pyruvate + NH4(+) + NADH + H(+). Its pathway is amino-acid degradation; L-alanine degradation via dehydrogenase pathway; NH(3) and pyruvate from L-alanine: step 1/1. Functionally, catalyzes the reversible reductive amination of pyruvate to L-alanine. May play a role in cell wall synthesis as L-alanine is an important constituent of the peptidoglycan layer. This Staphylococcus epidermidis (strain ATCC 35984 / DSM 28319 / BCRC 17069 / CCUG 31568 / BM 3577 / RP62A) protein is Alanine dehydrogenase (ald).